A 348-amino-acid polypeptide reads, in one-letter code: Protein RecA (348 aa).

65 to 72 (GPESSGKT) provides a ligand contact to ATP.

It belongs to the RecA family.

Its subcellular location is the cytoplasm. In terms of biological role, can catalyze the hydrolysis of ATP in the presence of single-stranded DNA, the ATP-dependent uptake of single-stranded DNA by duplex DNA, and the ATP-dependent hybridization of homologous single-stranded DNAs. It interacts with LexA causing its activation and leading to its autocatalytic cleavage. This is Protein RecA from Vibrio anguillarum (strain ATCC 68554 / 775) (Listonella anguillarum).